The chain runs to 294 residues: MAITAQMVKELREKTGAGMMDCKKALQETNGDIEQAIDFLREKGMAKAAKKADRVAAEGLTHIEVEGNKAAIIEVNCETDFVTKNDQFKQLLSELGKHIVANEPATVEEALQQKLHGDGETVESVITNAVAKIGEKISLRRFEVLEKTDNDAFGAYLHMGGTIGVLSLLEGTTDEQVGKDIAMHVAAVNPRYVTRDEVAEEEVNREREVLKTQALNEGKPENIVEKMVEGRLGKFFEDIVLLEQSFVKDPDQKVKKYVADKGAAVKTFVRYEVGEGMEKREENFAEEVMSQIKK.

The involved in Mg(2+) ion dislocation from EF-Tu stretch occupies residues 79–82; it reads TDFV.

This sequence belongs to the EF-Ts family.

It is found in the cytoplasm. In terms of biological role, associates with the EF-Tu.GDP complex and induces the exchange of GDP to GTP. It remains bound to the aminoacyl-tRNA.EF-Tu.GTP complex up to the GTP hydrolysis stage on the ribosome. The sequence is that of Elongation factor Ts from Oceanobacillus iheyensis (strain DSM 14371 / CIP 107618 / JCM 11309 / KCTC 3954 / HTE831).